We begin with the raw amino-acid sequence, 136 residues long: Large ribosomal subunit protein uL16 (136 aa).

This sequence belongs to the universal ribosomal protein uL16 family. Part of the 50S ribosomal subunit.

Functionally, binds 23S rRNA and is also seen to make contacts with the A and possibly P site tRNAs. This Aliivibrio fischeri (strain ATCC 700601 / ES114) (Vibrio fischeri) protein is Large ribosomal subunit protein uL16.